Consider the following 505-residue polypeptide: Glutamate--tRNA ligase (505 aa).

The 'HIGH' region signature appears at proline 12 to threonine 22. The short motif at lysine 253–arginine 257 is the 'KMSKS' region element. Lysine 256 lines the ATP pocket.

The protein belongs to the class-I aminoacyl-tRNA synthetase family. Glutamate--tRNA ligase type 1 subfamily. As to quaternary structure, monomer.

It localises to the cytoplasm. The enzyme catalyses tRNA(Glu) + L-glutamate + ATP = L-glutamyl-tRNA(Glu) + AMP + diphosphate. Its function is as follows. Catalyzes the attachment of glutamate to tRNA(Glu) in a two-step reaction: glutamate is first activated by ATP to form Glu-AMP and then transferred to the acceptor end of tRNA(Glu). The protein is Glutamate--tRNA ligase of Chlamydia caviae (strain ATCC VR-813 / DSM 19441 / 03DC25 / GPIC) (Chlamydophila caviae).